Here is a 461-residue protein sequence, read N- to C-terminus: ATP synthase subunit beta (461 aa).

151–158 (GGAGVGKT) serves as a coordination point for ATP.

The protein belongs to the ATPase alpha/beta chains family. F-type ATPases have 2 components, CF(1) - the catalytic core - and CF(0) - the membrane proton channel. CF(1) has five subunits: alpha(3), beta(3), gamma(1), delta(1), epsilon(1). CF(0) has three main subunits: a(1), b(2) and c(9-12). The alpha and beta chains form an alternating ring which encloses part of the gamma chain. CF(1) is attached to CF(0) by a central stalk formed by the gamma and epsilon chains, while a peripheral stalk is formed by the delta and b chains.

The protein localises to the cell inner membrane. It catalyses the reaction ATP + H2O + 4 H(+)(in) = ADP + phosphate + 5 H(+)(out). Its function is as follows. Produces ATP from ADP in the presence of a proton gradient across the membrane. The catalytic sites are hosted primarily by the beta subunits. The protein is ATP synthase subunit beta of Colwellia psychrerythraea (strain 34H / ATCC BAA-681) (Vibrio psychroerythus).